The primary structure comprises 93 residues: Small ribosomal subunit protein uS19 (93 aa).

It belongs to the universal ribosomal protein uS19 family.

In terms of biological role, protein S19 forms a complex with S13 that binds strongly to the 16S ribosomal RNA. The sequence is that of Small ribosomal subunit protein uS19 from Parafrankia sp. (strain EAN1pec).